Here is a 348-residue protein sequence, read N- to C-terminus: Putative S-adenosyl-L-methionine-dependent methyltransferase Mb3432 (348 aa).

S-adenosyl-L-methionine is bound by residues aspartate 171 and 200–201; that span reads DL.

Belongs to the UPF0677 family.

In terms of biological role, exhibits S-adenosyl-L-methionine-dependent methyltransferase activity. This is Putative S-adenosyl-L-methionine-dependent methyltransferase Mb3432 from Mycobacterium bovis (strain ATCC BAA-935 / AF2122/97).